Consider the following 123-residue polypeptide: Small ribosomal subunit protein uS12 (123 aa).

Position 89 is a 3-methylthioaspartic acid (Asp89). The segment at 104-123 (TQGVKDRRQRRSKYGAKRPK) is disordered. Residues 110-123 (RRQRRSKYGAKRPK) show a composition bias toward basic residues.

The protein belongs to the universal ribosomal protein uS12 family. Part of the 30S ribosomal subunit. Contacts proteins S8 and S17. May interact with IF1 in the 30S initiation complex.

Its function is as follows. With S4 and S5 plays an important role in translational accuracy. In terms of biological role, interacts with and stabilizes bases of the 16S rRNA that are involved in tRNA selection in the A site and with the mRNA backbone. Located at the interface of the 30S and 50S subunits, it traverses the body of the 30S subunit contacting proteins on the other side and probably holding the rRNA structure together. The combined cluster of proteins S8, S12 and S17 appears to hold together the shoulder and platform of the 30S subunit. The protein is Small ribosomal subunit protein uS12 of Rhodospirillum rubrum (strain ATCC 11170 / ATH 1.1.1 / DSM 467 / LMG 4362 / NCIMB 8255 / S1).